The primary structure comprises 633 residues: Kelch-like protein diablo (633 aa).

A disordered region spans residues 1–62; it reads MGDLPGSTGG…ARLSHTSEKH (62 aa). Residues 7-25 are compositionally biased toward gly residues; sequence STGGGGGVGGGGNGGGGPT. Residues 26–45 show a composition bias toward low complexity; the sequence is IAGTNGNSTTGPGSSTGSTG. A BTB domain is found at 80–147; sequence CDVVLNVGGR…CYTAHIIVEE (68 aa). One can recognise a BACK domain in the interval 182–284; the sequence is CLGIRAFADT…SPKFLVGTVG (103 aa). 6 Kelch repeats span residues 331-377, 379-425, 426-472, 474-519, 521-566, and 567-613; these read VLFA…VLND, LYAV…VLDG, FLYA…VLGG, LYAI…VFNN, IYAV…VVNG, and QLYA…VMRA.

It functions in the pathway protein modification; protein ubiquitination. Its function is as follows. Probable substrate-specific adapter of an E3 ubiquitin-protein ligase complex which mediates the ubiquitination and subsequent proteasomal degradation of target proteins. May have a role in synapse differentiation and growth. The polypeptide is Kelch-like protein diablo (Drosophila ananassae (Fruit fly)).